The primary structure comprises 669 residues: Dymeclin (669 aa).

Gly2 is lipidated: N-myristoyl glycine.

It belongs to the dymeclin family. Post-translationally, myristoylated in vitro; myristoylation is not essential for protein targeting to Golgi compartment.

Its subcellular location is the cytoplasm. It localises to the golgi apparatus. Its function is as follows. Necessary for correct organization of Golgi apparatus. The polypeptide is Dymeclin (DYM) (Gallus gallus (Chicken)).